The following is a 445-amino-acid chain: Ribulose bisphosphate carboxylase large chain (445 aa).

Substrate is bound by residues N89 and T139. Catalysis depends on K141, which acts as the Proton acceptor. K143 contributes to the substrate binding site. Mg(2+) contacts are provided by K167, D169, and E170. K167 bears the N6-carboxylysine mark. The active-site Proton acceptor is H260. Residues R261, H293, and S345 each coordinate substrate.

This sequence belongs to the RuBisCO large chain family. Type I subfamily. In terms of assembly, heterohexadecamer of 8 large chains and 8 small chains; disulfide-linked. The disulfide link is formed within the large subunit homodimers. It depends on Mg(2+) as a cofactor. Post-translationally, the disulfide bond which can form in the large chain dimeric partners within the hexadecamer appears to be associated with oxidative stress and protein turnover.

It localises to the plastid. The protein resides in the chloroplast. The catalysed reaction is 2 (2R)-3-phosphoglycerate + 2 H(+) = D-ribulose 1,5-bisphosphate + CO2 + H2O. The enzyme catalyses D-ribulose 1,5-bisphosphate + O2 = 2-phosphoglycolate + (2R)-3-phosphoglycerate + 2 H(+). In terms of biological role, ruBisCO catalyzes two reactions: the carboxylation of D-ribulose 1,5-bisphosphate, the primary event in carbon dioxide fixation, as well as the oxidative fragmentation of the pentose substrate in the photorespiration process. Both reactions occur simultaneously and in competition at the same active site. The protein is Ribulose bisphosphate carboxylase large chain of Callicarpa dichotoma (Purple beautyberry).